Consider the following 491-residue polypeptide: Cobyric acid synthase (491 aa).

The GATase cobBQ-type domain occupies 250–439 (ELNIIVIRLP…LHGIFDNGSW (190 aa)). Cys-331 serves as the catalytic Nucleophile. His-431 is a catalytic residue.

It belongs to the CobB/CobQ family. CobQ subfamily.

It functions in the pathway cofactor biosynthesis; adenosylcobalamin biosynthesis. In terms of biological role, catalyzes amidations at positions B, D, E, and G on adenosylcobyrinic A,C-diamide. NH(2) groups are provided by glutamine, and one molecule of ATP is hydrogenolyzed for each amidation. This is Cobyric acid synthase from Microcystis aeruginosa (strain NIES-843 / IAM M-2473).